We begin with the raw amino-acid sequence, 316 residues long: Ribosomal RNA small subunit methyltransferase H (316 aa).

S-adenosyl-L-methionine is bound by residues Ala35 to His37, Asp55, Phe84, Asp105, and Gln112.

Belongs to the methyltransferase superfamily. RsmH family.

The protein resides in the cytoplasm. It catalyses the reaction cytidine(1402) in 16S rRNA + S-adenosyl-L-methionine = N(4)-methylcytidine(1402) in 16S rRNA + S-adenosyl-L-homocysteine + H(+). Its function is as follows. Specifically methylates the N4 position of cytidine in position 1402 (C1402) of 16S rRNA. The chain is Ribosomal RNA small subunit methyltransferase H from Streptococcus pneumoniae (strain JJA).